We begin with the raw amino-acid sequence, 269 residues long: Mediator of RNA polymerase II transcription subunit 8 (269 aa).

The interval arginine 187 to arginine 217 is disordered. The span at glutamate 190 to glutamate 211 shows a compositional bias: acidic residues.

The protein belongs to the Mediator complex subunit 8 family. In terms of assembly, component of the Mediator complex.

Its subcellular location is the nucleus. Its function is as follows. Component of the Mediator complex, a coactivator involved in the regulated transcription of nearly all RNA polymerase II-dependent genes. Mediator functions as a bridge to convey information from gene-specific regulatory proteins to the basal RNA polymerase II transcription machinery. Mediator is recruited to promoters by direct interactions with regulatory proteins and serves as a scaffold for the assembly of a functional preinitiation complex with RNA polymerase II and the general transcription factors. This Aspergillus niger (strain ATCC MYA-4892 / CBS 513.88 / FGSC A1513) protein is Mediator of RNA polymerase II transcription subunit 8 (med8).